The primary structure comprises 380 residues: Cytochrome b (380 aa).

The next 4 helical transmembrane spans lie at 33–53, 77–98, 113–133, and 178–198; these read FGSLLGICLMVQIITGLFLAM, WLIRYMHANGASMFFICLFIHV, WNIGIALFLTTMATAFVGYVL, and FFAFHFILPFIITAFVLVHLL. Positions 83 and 97 each coordinate heme b. 2 residues coordinate heme b: His-182 and His-196. A ubiquinone is bound at residue His-201. Transmembrane regions (helical) follow at residues 226–246, 288–308, 320–340, and 347–367; these read IKDILGILMLLMVLMILVLFF, LGGVTALILSILILAMFPLIN, ITQAMYWIFIANLFILTWIGG, and FTMIGLISSILYFSIIVMFMF.

It belongs to the cytochrome b family. As to quaternary structure, the cytochrome bc1 complex contains 11 subunits: 3 respiratory subunits (MT-CYB, CYC1 and UQCRFS1), 2 core proteins (UQCRC1 and UQCRC2) and 6 low-molecular weight proteins (UQCRH/QCR6, UQCRB/QCR7, UQCRQ/QCR8, UQCR10/QCR9, UQCR11/QCR10 and a cleavage product of UQCRFS1). This cytochrome bc1 complex then forms a dimer. Requires heme b as cofactor.

The protein localises to the mitochondrion inner membrane. Its function is as follows. Component of the ubiquinol-cytochrome c reductase complex (complex III or cytochrome b-c1 complex) that is part of the mitochondrial respiratory chain. The b-c1 complex mediates electron transfer from ubiquinol to cytochrome c. Contributes to the generation of a proton gradient across the mitochondrial membrane that is then used for ATP synthesis. The chain is Cytochrome b (MT-CYB) from Calomys musculinus (Drylands vesper mouse).